The following is a 147-amino-acid chain: Lipoprotein YafY (147 aa).

An N-terminal signal peptide occupies residues 1 to 20 (MKRKTLPLLALVATTLFLIA). Residue Cys-21 is the site of N-palmitoyl cysteine attachment. Residue Cys-21 is the site of S-diacylglycerol cysteine attachment.

This sequence to E.coli YfjS.

Its subcellular location is the cell inner membrane. When overproduced strongly induces degP through the activation of the two-component envelope stress response system CpxA/CpxR. This is Lipoprotein YafY (yafY) from Escherichia coli (strain K12).